Consider the following 339-residue polypeptide: Ketol-acid reductoisomerase (NADP(+)) (339 aa).

One can recognise a KARI N-terminal Rossmann domain in the interval 1-182 (MRVYYDRDAD…GGGRSGVIET (182 aa)). Residues 24 to 27 (YGSQ), Arg-48, Ser-51, Thr-53, and 83 to 86 (DELQ) contribute to the NADP(+) site. The active site involves His-108. Position 134 (Gly-134) interacts with NADP(+). Residues 183 to 328 (TFKEECETDL…GKLRAMMPWI (146 aa)) form the KARI C-terminal knotted domain. Mg(2+) contacts are provided by Asp-191, Glu-195, Glu-227, and Glu-231. Ser-252 is a binding site for substrate.

Belongs to the ketol-acid reductoisomerase family. Mg(2+) is required as a cofactor.

The catalysed reaction is (2R)-2,3-dihydroxy-3-methylbutanoate + NADP(+) = (2S)-2-acetolactate + NADPH + H(+). The enzyme catalyses (2R,3R)-2,3-dihydroxy-3-methylpentanoate + NADP(+) = (S)-2-ethyl-2-hydroxy-3-oxobutanoate + NADPH + H(+). It participates in amino-acid biosynthesis; L-isoleucine biosynthesis; L-isoleucine from 2-oxobutanoate: step 2/4. The protein operates within amino-acid biosynthesis; L-valine biosynthesis; L-valine from pyruvate: step 2/4. In terms of biological role, involved in the biosynthesis of branched-chain amino acids (BCAA). Catalyzes an alkyl-migration followed by a ketol-acid reduction of (S)-2-acetolactate (S2AL) to yield (R)-2,3-dihydroxy-isovalerate. In the isomerase reaction, S2AL is rearranged via a Mg-dependent methyl migration to produce 3-hydroxy-3-methyl-2-ketobutyrate (HMKB). In the reductase reaction, this 2-ketoacid undergoes a metal-dependent reduction by NADPH to yield (R)-2,3-dihydroxy-isovalerate. This Brucella suis (strain ATCC 23445 / NCTC 10510) protein is Ketol-acid reductoisomerase (NADP(+)).